Here is a 137-residue protein sequence, read N- to C-terminus: Putative mucosal pentraxin homolog (137 aa).

A Pentraxin (PTX) domain is found at 1-137 (MGMYLLHIGN…YVVTKPKVWA (137 aa)). E73, D75, and Q85 together coordinate Ca(2+).

It belongs to the pentraxin family. In terms of tissue distribution, not expressed in the intestinal tract including ascending colon, descending colon and rectum. Not expressed in the human colon cancer cell lines HT-29 and CaCo-2.

This is Putative mucosal pentraxin homolog (MPTX1) from Homo sapiens (Human).